Reading from the N-terminus, the 507-residue chain is Ribonuclease Y (507 aa).

A helical membrane pass occupies residues 1–21 (MLWYIVAGAGGLLIGYLIASY). In terms of domain architecture, KH spans 197–282 (TVSTVSLPSD…EMYEKAKQEV (86 aa)). The HD domain occupies 323 to 416 (VLNHSIEVAL…VAAADALSAA (94 aa)).

It belongs to the RNase Y family.

It is found in the cell membrane. Functionally, endoribonuclease that initiates mRNA decay. This is Ribonuclease Y from Thermotoga petrophila (strain ATCC BAA-488 / DSM 13995 / JCM 10881 / RKU-1).